Reading from the N-terminus, the 322-residue chain is Acetylglutamate kinase (322 aa).

Substrate-binding positions include 89–90 (GG), arginine 111, and asparagine 217.

The protein belongs to the acetylglutamate kinase family. ArgB subfamily.

Its subcellular location is the cytoplasm. It catalyses the reaction N-acetyl-L-glutamate + ATP = N-acetyl-L-glutamyl 5-phosphate + ADP. Its pathway is amino-acid biosynthesis; L-arginine biosynthesis; N(2)-acetyl-L-ornithine from L-glutamate: step 2/4. Catalyzes the ATP-dependent phosphorylation of N-acetyl-L-glutamate. This chain is Acetylglutamate kinase, found in Ehrlichia ruminantium (strain Gardel).